The primary structure comprises 660 residues: Putative ABC transporter ATP-binding MG390 homolog (660 aa).

The Peptidase C39 domain occupies 6 to 126 (QEQPNECGIC…KQWTGYAATV (121 aa)). C12 is a catalytic residue. A run of 6 helical transmembrane segments spans residues 150 to 170 (LIIF…LLAT), 188 to 208 (IVVF…LYAL), 265 to 285 (HIPN…LIGI), 290 to 310 (FLWI…YDFF), 379 to 399 (SFAQ…GIIE), and 402 to 422 (YTLA…AYAT). One can recognise an ABC transporter domain in the interval 464–660 (INLNNCSITL…INLSPYLQQT (197 aa)). 494–501 (GENGSGKS) is a binding site for ATP.

This sequence belongs to the ABC transporter superfamily.

The protein localises to the cell membrane. The chain is Putative ABC transporter ATP-binding MG390 homolog from Mycoplasma pneumoniae (strain ATCC 29342 / M129 / Subtype 1) (Mycoplasmoides pneumoniae).